The primary structure comprises 438 residues: GTPase Der (438 aa).

EngA-type G domains lie at 4–168 (PVVA…DDNS) and 177–352 (TKVC…NNYS). GTP-binding positions include 10-17 (GRANVGKS), 57-61 (DTGGL), 120-123 (NKID), 183-190 (GKPNVGKS), 230-234 (DTAGL), and 295-298 (NKWD). The KH-like domain maps to 353 to 437 (MRISTGVLND…PLQFEFKTRG (85 aa)).

The protein belongs to the TRAFAC class TrmE-Era-EngA-EngB-Septin-like GTPase superfamily. EngA (Der) GTPase family. Associates with the 50S ribosomal subunit.

GTPase that plays an essential role in the late steps of ribosome biogenesis. This Finegoldia magna (strain ATCC 29328 / DSM 20472 / WAL 2508) (Peptostreptococcus magnus) protein is GTPase Der.